The following is a 360-amino-acid chain: Methionine import ATP-binding protein MetN (360 aa).

A disordered region spans residues M1 to G22. In terms of domain architecture, ABC transporter spans V25–V265. G62–S69 provides a ligand contact to ATP.

This sequence belongs to the ABC transporter superfamily. Methionine importer (TC 3.A.1.24) family. In terms of assembly, the complex is composed of two ATP-binding proteins (MetN), two transmembrane proteins (MetI) and a solute-binding protein (MetQ).

The protein resides in the cell membrane. It catalyses the reaction L-methionine(out) + ATP + H2O = L-methionine(in) + ADP + phosphate + H(+). It carries out the reaction D-methionine(out) + ATP + H2O = D-methionine(in) + ADP + phosphate + H(+). Functionally, part of the ABC transporter complex MetNIQ involved in methionine import. Responsible for energy coupling to the transport system. The polypeptide is Methionine import ATP-binding protein MetN (Corynebacterium glutamicum (strain ATCC 13032 / DSM 20300 / JCM 1318 / BCRC 11384 / CCUG 27702 / LMG 3730 / NBRC 12168 / NCIMB 10025 / NRRL B-2784 / 534)).